We begin with the raw amino-acid sequence, 394 residues long: Saposin-like protein 11 (394 aa).

A signal peptide spans 1–18; that stretch reads MSVFRFLLFLSLLVGSNA. N-linked (GlcNAc...) asparagine glycosylation is found at Asn25 and Asn272. The 89-residue stretch at 306-394 folds into the Saposin B-type domain; that stretch reads GNMVCDICEK…SFCKHVPFCK (89 aa). 3 disulfides stabilise this stretch: Cys310–Cys393, Cys313–Cys387, and Cys343–Cys359.

This chain is Saposin-like protein 11 (spp-11), found in Caenorhabditis elegans.